A 238-amino-acid polypeptide reads, in one-letter code: Androgen-induced gene 1 protein (238 aa).

Over 1–12 (MALVPCQVLRMA) the chain is Cytoplasmic. A helical transmembrane segment spans residues 13–30 (ILLSYCSILCNYKAIEMP). The Extracellular portion of the chain corresponds to 31-44 (SHQTYGGSWKFLTF). The helical transmembrane segment at 45–67 (IDLVIQAVFFGICVLTDLSSLLT) threads the bilayer. The Cytoplasmic segment spans residues 68–87 (RGSGNQEQERQLKKLISLRD). Residues 88–110 (WMLAVLAFPVGVFVVAVFWIIYA) traverse the membrane as a helical segment. Residues 111 to 124 (YDREMIYPKLLDNF) lie on the Extracellular side of the membrane. The chain crosses the membrane as a helical span at residues 125–144 (IPGWLNHGMHTTVLPFILIE). Over 145 to 156 (MRTSHHQYPSRS) the chain is Cytoplasmic. Residues 157-179 (SGLTAICTFSVGYILWVCWVHHV) traverse the membrane as a helical segment. Topologically, residues 180 to 193 (TGMWVYPFLEHIGP) are extracellular. Residues 194-216 (GARIIFFGSTTILMNFLYLLGEV) traverse the membrane as a helical segment. Residues 217-238 (LNNYIWDTQKSMEEEKEKPKLE) lie on the Cytoplasmic side of the membrane.

Belongs to the AIG1 family. As to expression, highly expressed in heart, ovary, testis, liver, and kidney, at lower levels in spleen, prostate, brain, skeletal muscle, pancreas, small intestine and colon, and undetected in peripheral blood leukocytes, thymus, lung and placenta. AIG1 expression is higher in hair follicles from males than from females.

Its subcellular location is the cell membrane. The catalysed reaction is 9-hexadecanoyloxy-octadecanoate + H2O = 9-hydroxy-octadecanoate + hexadecanoate + H(+). It carries out the reaction 12-hexadecanoyloxy-octadecanoate + H2O = 12-hydroxyoctadecanoate + hexadecanoate + H(+). The enzyme catalyses 9-(9Z-hexadecenoyloxy)-octadecanoate + H2O = (9Z)-hexadecenoate + 9-hydroxy-octadecanoate + H(+). It catalyses the reaction 12-(9Z-hexadecenoyloxy)-octadecanoate + H2O = 12-hydroxyoctadecanoate + (9Z)-hexadecenoate + H(+). The catalysed reaction is 13-(9Z-hexadecenoyloxy)-octadecanoate + H2O = 13-hydroxy-octadecanoate + (9Z)-hexadecenoate + H(+). It carries out the reaction 9-octadecanoyloxy-octadecanoate + H2O = 9-hydroxy-octadecanoate + octadecanoate + H(+). The enzyme catalyses 12-octadecanoyloxy-octadecanoate + H2O = 12-hydroxyoctadecanoate + octadecanoate + H(+). It catalyses the reaction 13-octadecanoyloxy-octadecanoate + H2O = 13-hydroxy-octadecanoate + octadecanoate + H(+). The catalysed reaction is 9-(9Z-octadecenoyloxy)-octadecanoate + H2O = 9-hydroxy-octadecanoate + (9Z)-octadecenoate + H(+). It carries out the reaction 12-(9Z-octadecenoyloxy)-octadecanoate + H2O = 12-hydroxyoctadecanoate + (9Z)-octadecenoate + H(+). The enzyme catalyses 13-(9Z-octadecenoyloxy)-octadecanoate + H2O = 13-hydroxy-octadecanoate + (9Z)-octadecenoate + H(+). It catalyses the reaction 5-(9Z-hexadecenoyloxy)-octadecanoate + H2O = 5-hydroxy-octadecanoate + (9Z)-hexadecenoate + H(+). Inhibited by N-hydroxyhydantoin carbamate JJH260 and beta-lactone KC01. Hydrolyzes bioactive fatty-acid esters of hydroxy-fatty acids (FAHFAs), but not other major classes of lipids. Show a preference for FAHFAs with branching distal from the carboxylate head group of the lipids. This Homo sapiens (Human) protein is Androgen-induced gene 1 protein (AIG1).